We begin with the raw amino-acid sequence, 217 residues long: GTP cyclohydrolase 1 (217 aa).

3 residues coordinate Zn(2+): Cys109, His112, and Cys180.

It belongs to the GTP cyclohydrolase I family. In terms of assembly, toroid-shaped homodecamer, composed of two pentamers of five dimers.

The catalysed reaction is GTP + H2O = 7,8-dihydroneopterin 3'-triphosphate + formate + H(+). Its pathway is cofactor biosynthesis; 7,8-dihydroneopterin triphosphate biosynthesis; 7,8-dihydroneopterin triphosphate from GTP: step 1/1. This Vibrio vulnificus (strain CMCP6) protein is GTP cyclohydrolase 1.